The sequence spans 423 residues: Ferrochelatase, mitochondrial (423 aa).

The N-terminal 54 residues, 1-54 (MRSLGANMAAALRAAGVLLRDPLVSSSWRVYQPWRWKSVAAAAAATTETAQHAQ), are a transit peptide targeting the mitochondrion. Lysine 57 carries the N6-acetyllysine modification. Protoporphyrin IX-binding residues include arginine 115, tyrosine 123, and serine 130. Lysine 138 bears the N6-succinyllysine mark. Cysteine 196 provides a ligand contact to [2Fe-2S] cluster. Active-site residues include histidine 230 and aspartate 383. [2Fe-2S] cluster-binding residues include cysteine 403, cysteine 406, and cysteine 411. Lysine 415 carries the N6-acetyllysine; alternate modification. Lysine 415 bears the N6-succinyllysine; alternate mark.

It belongs to the ferrochelatase family. Homodimer. Homotetramer. Interaction with PGRMC1; the interaction results in decreased FECH activity. Interacts with ABCB10 and SLC25A37; this interaction forms an oligomeric complex. Forms a complex with ABCB7 and ABCB10, where a dimeric FECH bridges ABCB7 and ABCB10 homodimers; this complex may be required for cellular iron homeostasis, mitochondrial function and heme biosynthesis. Interacts with ABCB7 and ABCB10. It depends on [2Fe-2S] cluster as a cofactor.

Its subcellular location is the mitochondrion inner membrane. It catalyses the reaction heme b + 2 H(+) = protoporphyrin IX + Fe(2+). The protein operates within porphyrin-containing compound metabolism; protoheme biosynthesis; protoheme from protoporphyrin-IX: step 1/1. In terms of biological role, catalyzes the ferrous insertion into protoporphyrin IX and participates in the terminal step in the heme biosynthetic pathway. This is Ferrochelatase, mitochondrial from Pan troglodytes (Chimpanzee).